The sequence spans 1641 residues: Alpha-2-macroglobulin (1641 aa).

A signal peptide spans 1-31 (MRDRVAMMLRPLVRGWIPRAVLLLTVAFSFG). Residue C32 is the site of N-palmitoyl cysteine attachment. The S-diacylglycerol cysteine moiety is linked to residue C32. The segment at residues 1166–1169 (CAEQ) is a cross-link (isoglutamyl cysteine thioester (Cys-Gln)).

This sequence belongs to the protease inhibitor I39 (alpha-2-macroglobulin) family. Bacterial alpha-2-macroglobulin subfamily.

It localises to the cell membrane. Protects the bacterial cell from host peptidases. The chain is Alpha-2-macroglobulin from Xylella fastidiosa (strain 9a5c).